Reading from the N-terminus, the 480-residue chain is uncharacterized protein (480 aa).

A signal peptide spans 1–21 (MSRYFSFFFLALFLHYRIIVA). Disordered stretches follow at residues 38-72 (SSHLLHHSLPPPLLTQSHSSLSDPDPEPEPSSAEC) and 116-147 (SPLITENGTHADPKTPDLKTSSEAQGDTNDQT). Over residues 51–60 (LTQSHSSLSD) the composition is skewed to low complexity. The span at 133-144 (LKTSSEAQGDTN) shows a compositional bias: polar residues. Residues 153–173 (YAVEIACVCFLIALAINYFVG) form a helical membrane-spanning segment. The disordered stretch occupies residues 404–480 (QARNKTESGR…VPKMKMSRSH (77 aa)). Basic and acidic residues predominate over residues 407 to 465 (NKTESGRQKAAEEAYKELHNARQEALQKKKAEKKKMMEEAEAKMSAEVIRKKEAKERAR). A coiled-coil region spans residues 411 to 467 (SGRQKAAEEAYKELHNARQEALQKKKAEKKKMMEEAEAKMSAEVIRKKEAKERARQV). Over residues 466-480 (QVKKAVPKMKMSRSH) the composition is skewed to basic residues.

It localises to the membrane. This is an uncharacterized protein from Arabidopsis thaliana (Mouse-ear cress).